The primary structure comprises 383 residues: uncharacterized protein (383 aa).

Residues cysteine 12, cysteine 18, cysteine 21, and cysteine 88 each coordinate [4Fe-4S] cluster. S-adenosyl-L-methionine is bound by residues glutamine 219, phenylalanine 246, glutamate 267, and aspartate 314. Cysteine 341 acts as the Nucleophile in catalysis.

It belongs to the class I-like SAM-binding methyltransferase superfamily. RNA M5U methyltransferase family.

This is an uncharacterized protein from Protochlamydia amoebophila (strain UWE25).